Consider the following 260-residue polypeptide: Phosphate import ATP-binding protein PstB (260 aa).

In terms of domain architecture, ABC transporter spans 13–255 (MRAQGVNVFY…PKQERTKDYI (243 aa)). 45-52 (GPSGCGKS) lines the ATP pocket.

It belongs to the ABC transporter superfamily. Phosphate importer (TC 3.A.1.7) family. As to quaternary structure, the complex is composed of two ATP-binding proteins (PstB), two transmembrane proteins (PstC and PstA) and a solute-binding protein (PstS).

Its subcellular location is the cell inner membrane. It catalyses the reaction phosphate(out) + ATP + H2O = ADP + 2 phosphate(in) + H(+). Part of the ABC transporter complex PstSACB involved in phosphate import. Responsible for energy coupling to the transport system. This Sphingopyxis alaskensis (strain DSM 13593 / LMG 18877 / RB2256) (Sphingomonas alaskensis) protein is Phosphate import ATP-binding protein PstB.